The chain runs to 494 residues: MSHEELNDQLRVRREKLKKIEELGVDPFGKRFERTHKAEELFELYGDLSKEELEEQQIEVAVAGRIMTKRGMGKAGFAHIQDVTGQIQIYVRQDDVGEQQYELFKISDLGDIVGVRGTMFKTKVGELSIKVSSYEFLTKALRPLPEKYHGLKDIEQRYRQRYLDLIMNPESKKTFITRSLIIQSMRRYLDSHGYLEVETPMMHAVAGGAAARPFITHHNALDMTLYMRIAIELHLKRLIVGGLEKVYEIGRVFRNEGISTRHNPEFTMLELYEAYADFRDIMKLTENLIAHIATEVLGTTKIQYGEHLVDLTPEWRRLHMVDAIKEYVGVDFWRQMSDEEARELAKEHGVEVAPHMTFGHIVNEFFEQKVEDKLIQPTFIYGHPVEISPLAKKNPDDPRFTDRFELFIVGREHANAFTELNDPIDQRQRFEEQLKEREQGNDEAHEMDEDFLEALEYGMPPTGGLGIGVDRLVMLLTNSPSIRDVLLFPQMRHK.

Positions 405 and 412 each coordinate Mg(2+).

It belongs to the class-II aminoacyl-tRNA synthetase family. As to quaternary structure, homodimer. Requires Mg(2+) as cofactor.

The protein localises to the cytoplasm. The catalysed reaction is tRNA(Lys) + L-lysine + ATP = L-lysyl-tRNA(Lys) + AMP + diphosphate. This chain is Lysine--tRNA ligase (lysS), found in Geobacillus stearothermophilus (Bacillus stearothermophilus).